We begin with the raw amino-acid sequence, 597 residues long: MSNGLRTSFERISLFHPQGFISESSAEFCCSAPSNLSPKFPMDHWERTSSFSPRCRHPDLRVRLQSSPPRGPQSDRNLPSLQPLELHGDRPGLCDVHETLQVQKIGLRQSKLLRTSKLPSHRGRFRSIPLHLHLSSEVRNRFHARCPDVLQPLSDTRPLHSVPLSSEAPLQSSCSPRKLLHRPLSPPKPLHLHNFRQHSSLCSRRSPCRKLRPTPRCNQLAQAQQHPLPSSKPLSLQAGILGPCPLPPHNKRSPSPAVIRKTAGILPHPKLPPSSRGHLPSSTSSSSPRSNRGVRCSVHLHKSRSNSQDLRSCRVRSNSLQQTPILMGHFKSLGQSPNLRSFERPRPTRRSLRLLPLSPQKVPTVHVPTHQQSGHKGPSLPRPHSPSRQTHHARLPHSKRVSLPNSVLHHDRPKRPIHFGSFPINVAPSHLLPRKLWSRASSPPTCSPTTSNHGHPEEALRFLPKNLPQHCQMALMENYCSHFSSPSSSVSFPEDHQSSLPPISTRWVQCSSPSFSLQSFLVIGDIPCPISFPLSSPQSHSSESLRGDSPPSSHLPSSPSSACSGDSFASCSSFGPSNPTSSASALGGNHFNFSFFS.

Disordered regions lie at residues 62–82 (VRLQ…PSLQ), 160–198 (HSVP…FRQH), 218–315 (NQLA…SCRV), 329–411 (HFKS…LHHD), and 535–586 (SSPQ…ASAL). Residues 64-80 (LQSSPPRGPQSDRNLPS) show a composition bias toward polar residues. The span at 218–234 (NQLAQAQQHPLPSSKPL) shows a compositional bias: polar residues. Over residues 273-291 (PSSRGHLPSSTSSSSPRSN) the composition is skewed to low complexity. The span at 305–315 (SNSQDLRSCRV) shows a compositional bias: polar residues. Residues 389–400 (QTHHARLPHSKR) are compositionally biased toward basic residues. Over residues 535–574 (SSPQSHSSESLRGDSPPSSHLPSSPSSACSGDSFASCSSF) the composition is skewed to low complexity. Polar residues predominate over residues 575–584 (GPSNPTSSAS).

Belongs to the tymoviridae protein p69 family.

In Ononis, this protein is 66 kDa protein.